The sequence spans 95 residues: Translation initiation factor 1A (95 aa).

Positions 7-81 constitute an S1-like domain; sequence GRKNLRMPED…DKADVTWRYE (75 aa).

It belongs to the eIF-1A family.

Seems to be required for maximal rate of protein biosynthesis. Enhances ribosome dissociation into subunits and stabilizes the binding of the initiator Met-tRNA(I) to 40 S ribosomal subunits. This is Translation initiation factor 1A (eIF1A) from Halobacterium salinarum (strain ATCC 29341 / DSM 671 / R1).